A 121-amino-acid chain; its full sequence is Holo-[acyl-carrier-protein] synthase (121 aa).

2 residues coordinate Mg(2+): D5 and E50.

The protein belongs to the P-Pant transferase superfamily. AcpS family. Mg(2+) serves as cofactor.

It is found in the cytoplasm. It carries out the reaction apo-[ACP] + CoA = holo-[ACP] + adenosine 3',5'-bisphosphate + H(+). Its function is as follows. Transfers the 4'-phosphopantetheine moiety from coenzyme A to a Ser of acyl-carrier-protein. This is Holo-[acyl-carrier-protein] synthase from Sulfurimonas denitrificans (strain ATCC 33889 / DSM 1251) (Thiomicrospira denitrificans (strain ATCC 33889 / DSM 1251)).